The primary structure comprises 405 residues: Glucan 1,3-beta-glucosidase A (405 aa).

The N-terminal stretch at 1 to 14 (MLPLLLCIVPYCWS) is a signal peptide. Catalysis depends on glutamate 199, which acts as the Proton donor. 2 disulfides stabilise this stretch: cysteine 280/cysteine 405 and cysteine 306/cysteine 332. The active-site Nucleophile is the glutamate 298.

Belongs to the glycosyl hydrolase 5 (cellulase A) family. Monomer. The cofactor is Mn(2+).

The protein localises to the secreted. The enzyme catalyses Successive hydrolysis of beta-D-glucose units from the non-reducing ends of (1-&gt;3)-beta-D-glucans, releasing alpha-glucose.. In terms of biological role, beta-glucanases participate in the metabolism of beta-glucan, the main structural component of the cell wall. It could also function biosynthetically as a transglycosylase. In Aspergillus oryzae (strain ATCC 42149 / RIB 40) (Yellow koji mold), this protein is Glucan 1,3-beta-glucosidase A (exgA).